Reading from the N-terminus, the 245-residue chain is Pyridoxine 5'-phosphate synthase (245 aa).

Residue asparagine 7 coordinates 3-amino-2-oxopropyl phosphate. Residue 9–10 (DH) coordinates 1-deoxy-D-xylulose 5-phosphate. Arginine 18 is a binding site for 3-amino-2-oxopropyl phosphate. Histidine 43 acts as the Proton acceptor in catalysis. Arginine 45 and histidine 50 together coordinate 1-deoxy-D-xylulose 5-phosphate. Residue glutamate 70 is the Proton acceptor of the active site. Threonine 100 lines the 1-deoxy-D-xylulose 5-phosphate pocket. Histidine 190 (proton donor) is an active-site residue. Residues glycine 191 and 212–213 (GH) contribute to the 3-amino-2-oxopropyl phosphate site.

This sequence belongs to the PNP synthase family. Homooctamer; tetramer of dimers.

It localises to the cytoplasm. The catalysed reaction is 3-amino-2-oxopropyl phosphate + 1-deoxy-D-xylulose 5-phosphate = pyridoxine 5'-phosphate + phosphate + 2 H2O + H(+). The protein operates within cofactor biosynthesis; pyridoxine 5'-phosphate biosynthesis; pyridoxine 5'-phosphate from D-erythrose 4-phosphate: step 5/5. Catalyzes the complicated ring closure reaction between the two acyclic compounds 1-deoxy-D-xylulose-5-phosphate (DXP) and 3-amino-2-oxopropyl phosphate (1-amino-acetone-3-phosphate or AAP) to form pyridoxine 5'-phosphate (PNP) and inorganic phosphate. This chain is Pyridoxine 5'-phosphate synthase, found in Prochlorococcus marinus (strain MIT 9303).